A 584-amino-acid polypeptide reads, in one-letter code: Mitochondrial sodium/calcium exchanger protein (584 aa).

The N-terminal stretch at 1-26 is a signal peptide; sequence MAGRRLNLRWALSVLCVLLMAETVSG. At 27–95 the chain is on the extracellular side; sequence TRGSSTGAHI…GIFCHFPPSL (69 aa). N60 carries N-linked (GlcNAc...) asparagine glycosylation. A helical transmembrane segment spans residues 96–116; it reads LPLAVTLYVSWLLYLFLILGV. Topologically, residues 117-140 are cytoplasmic; it reads TAAKFFCPNLSAISTTLKLSHNVA. The chain crosses the membrane as a helical span at residues 141 to 161; sequence GVTFLAFGNGAPDIFSALVAF. Residues 162 to 168 lie on the Extracellular side of the membrane; it reads SDPHTAG. A helical membrane pass occupies residues 169–189; that stretch reads LALGALFGAGVLVTTVVAGGI. Over 190 to 200 the chain is Cytoplasmic; that stretch reads TILHPFMAASR. The chain crosses the membrane as a helical span at residues 201-221; the sequence is PFFRDIVFYMVAVFLTFLMLF. The Extracellular segment spans residues 222-226; the sequence is RGRVT. Residues 227 to 247 traverse the membrane as a helical segment; sequence LAWALGYLGLYVFYVVTVILC. Residues 248–325 lie on the Cytoplasmic side of the membrane; sequence TWIYQRQRRG…KWRRKSAYWK (78 aa). S258 carries the phosphoserine; by PKA modification. The helical transmembrane segment at 326–346 threads the bilayer; that stretch reads ALKVFKLPVEFLLLLTVPVVD. The Extracellular portion of the chain corresponds to 347 to 360; sequence PDKDDQNWKRPLNC. Residues 361–381 form a helical membrane-spanning segment; it reads LHLVISPLVVVLTLQSGTYGV. Residues 382-383 lie on the Cytoplasmic side of the membrane; sequence YE. The helical transmembrane segment at 384–404 threads the bilayer; it reads IGGLVPVWVVVVIAGTALASV. The Extracellular portion of the chain corresponds to 405–416; it reads TFFATSDSQPPR. The chain crosses the membrane as a helical span at residues 417–437; that stretch reads LHWLFAFLGFLTSALWINAAA. Over 438–445 the chain is Cytoplasmic; that stretch reads TEVVNILR. The chain crosses the membrane as a helical span at residues 446-466; sequence SLGVVFRLSNTVLGLTLLAWG. Residues 467-487 are Extracellular-facing; the sequence is NSIGDAFSDFTLARQGYPRMA. A helical transmembrane segment spans residues 488 to 508; it reads FSACFGGIIFNILVGVGLGCL. The Cytoplasmic portion of the chain corresponds to 509–524; the sequence is LQISRSHTEVKLEPDG. A helical membrane pass occupies residues 525–545; it reads LLVWVLAGALGLSLVFSLVSV. Residues 546 to 558 are Extracellular-facing; sequence PLQCFQLSRVYGF. The helical transmembrane segment at 559 to 579 threads the bilayer; sequence CLLLFYLNFLVVALLTEFGVI. At 580–584 the chain is on the cytoplasmic side; it reads HLKSM.

It belongs to the Ca(2+):cation antiporter (CaCA) (TC 2.A.19) family. SLC24A subfamily. Phosphorylation at Ser-258 by PKA prevents calcium overload. Present in pancreatic beta-cells (at protein level).

It is found in the mitochondrion inner membrane. The catalysed reaction is Ca(2+)(in) + 3 Na(+)(out) = Ca(2+)(out) + 3 Na(+)(in). It catalyses the reaction 3 Li(+)(out) + Ca(2+)(in) = 3 Li(+)(in) + Ca(2+)(out). With respect to regulation, inhibited by the sodium/calcium exchanger inhibitor CGP-37157. Strongly inhibited by zinc. In terms of biological role, mitochondrial sodium/calcium antiporter that mediates sodium-dependent calcium efflux from mitochondrion, by mediating the exchange of 3 sodium ions per 1 calcium ion. Plays a central role in mitochondrial calcium homeostasis by mediating mitochondrial calcium extrusion: calcium efflux is essential for mitochondrial function and cell survival, notably in cardiomyocytes. Regulates rates of glucose-dependent insulin secretion in pancreatic beta-cells during the first phase of insulin secretion: acts by mediating efflux of calcium from mitochondrion, thereby affecting cytoplasmic calcium responses. Required for store-operated Ca(2+) entry (SOCE) and Ca(2+) release-activated Ca(2+) (CRAC) channel regulation: sodium transport by SLC8B1 leads to promote calcium-shuttling that modulates mitochondrial redox status, thereby regulating SOCE activity. Involved in B-lymphocyte chemotaxis. Able to transport Ca(2+) in exchange of either Li(+) or Na(+), explaining how Li(+) catalyzes Ca(2+) exchange. In contrast to other members of the family its function is independent of K(+). In Homo sapiens (Human), this protein is Mitochondrial sodium/calcium exchanger protein.